Consider the following 80-residue polypeptide: MAFLKKSLFLVLFLGIVSLSICEEEKREGEEEEKQEEENEELSEEELRERRALLDKLKSLGKVVGKVALGVVQNYLNPRQ.

An N-terminal signal peptide occupies residues 1-22; it reads MAFLKKSLFLVLFLGIVSLSIC. The propeptide occupies 23–49; that stretch reads EEEKREGEEEEKQEEENEELSEEELRE.

It belongs to the frog skin active peptide (FSAP) family. Dermaseptin subfamily. In terms of tissue distribution, expressed by the skin glands.

It is found in the secreted. Its function is as follows. Has antibacterial activity. This Boana raniceps (Chaco tree frog) protein is Raniseptin-6.